The sequence spans 189 residues: Peptidyl-tRNA hydrolase (189 aa).

Tyr-14 is a tRNA binding site. The active-site Proton acceptor is His-19. TRNA is bound by residues Tyr-64, Asn-66, and Asn-112.

This sequence belongs to the PTH family. In terms of assembly, monomer.

It localises to the cytoplasm. The catalysed reaction is an N-acyl-L-alpha-aminoacyl-tRNA + H2O = an N-acyl-L-amino acid + a tRNA + H(+). Its function is as follows. Hydrolyzes ribosome-free peptidyl-tRNAs (with 1 or more amino acids incorporated), which drop off the ribosome during protein synthesis, or as a result of ribosome stalling. Catalyzes the release of premature peptidyl moieties from peptidyl-tRNA molecules trapped in stalled 50S ribosomal subunits, and thus maintains levels of free tRNAs and 50S ribosomes. This chain is Peptidyl-tRNA hydrolase, found in Dehalococcoides mccartyi (strain ATCC BAA-2266 / KCTC 15142 / 195) (Dehalococcoides ethenogenes (strain 195)).